A 245-amino-acid chain; its full sequence is MAVRASFENNCEIGCFAKLTNSYCLVAIGGSENFYSVFEGELAGTIPVVHASIAGCRIIGRMCVGNRHGLLVPNNTTDQELQHIRNCLPDSVQIRRVEERLSALGNVTTCNDYVALVHPDLDRETEEILADVLKVEVFRQTVADQVLVGSYCVFSNQGGLVHPKTSIEDQDELSSLLQVPLVAGTVNRGSEVIAAGMVVNDWCAFCGLDTTSTELSVVESVFKLNEAQPSTIATSMRDSLIDSLT.

Tyr113 bears the Phosphotyrosine mark. At Thr165 the chain carries Phosphothreonine. Ser166 carries the phosphoserine modification. Ser174 and Ser175 each carry phosphoserine; by CK1. Position 235 is a phosphoserine; by PKC (Ser235). Residues Ser239 and Ser243 each carry the phosphoserine modification.

This sequence belongs to the eIF-6 family. Monomer. Associates with the 60S ribosomal subunit. Interacts with RACK1. Interacts with DICER1, AGO2, TARBP2, MOV10 and RPL7A; they form a large RNA-induced silencing complex (RISC). In terms of processing, phosphorylation at Ser-174 and Ser-175 by CSNK1D/CK1 promotes nuclear export. Post-translationally, ufmylated by UFL1.

The protein resides in the cytoplasm. It localises to the nucleus. It is found in the nucleolus. Its function is as follows. Binds to the 60S ribosomal subunit and prevents its association with the 40S ribosomal subunit to form the 80S initiation complex in the cytoplasm. Behaves as a stimulatory translation initiation factor downstream insulin/growth factors. Is also involved in ribosome biogenesis. Associates with pre-60S subunits in the nucleus and is involved in its nuclear export. Cytoplasmic release of TIF6 from 60S subunits and nuclear relocalization is promoted by a RACK1 (RACK1)-dependent protein kinase C activity. In tissues responsive to insulin, controls fatty acid synthesis and glycolysis by exerting translational control of adipogenic transcription factors such as CEBPB, CEBPD and ATF4 that have G/C rich or uORF in their 5'UTR. Required for ROS-dependent megakaryocyte maturation and platelets formation, controls the expression of mitochondrial respiratory chain genes involved in reactive oxygen species (ROS) synthesis. Involved in miRNA-mediated gene silencing by the RNA-induced silencing complex (RISC). Required for both miRNA-mediated translational repression and miRNA-mediated cleavage of complementary mRNAs by RISC. Modulates cell cycle progression and global translation of pre-B cells, its activation seems to be rate-limiting in tumorigenesis and tumor growth. In Bos taurus (Bovine), this protein is Eukaryotic translation initiation factor 6.